We begin with the raw amino-acid sequence, 182 residues long: UPF0397 protein llmg_0343 (182 aa).

The next 5 helical transmembrane spans lie at 8–28 (IVVATGIGAALFVIIGWLINI), 42–62 (AVLALFSALFGPLAGFLIGFI), 74–94 (APWWTWVLGSGLMGLFLGFGV), 114–134 (IVQFLANVVVWGLIAPIGDIL), and 146–166 (QGVVAGLVNALTIAVAGTLLL).

This sequence belongs to the UPF0397 family.

Its subcellular location is the cell membrane. This Lactococcus lactis subsp. cremoris (strain MG1363) protein is UPF0397 protein llmg_0343.